We begin with the raw amino-acid sequence, 498 residues long: Envelope glycoprotein G (498 aa).

The signal sequence occupies residues 1 to 20 (MKWATWILALGLLVVRTVVA). N-linked (GlcNAc...) asparagine; by host glycans are attached at residues Asn56, Asn86, Asn142, and Asn226. A run of 2 repeats spans residues 271–292 (EEEA…VGSP) and 308–329 (EEDE…VGSP). The segment at 271–329 (EEEAELTSSDLDNIEIEVVGSPAAPAEGPATEEGRGAEEDEELTSSDLDNIEIEVVGSP) is 2 X 22 AA repeats of E-E-[DE]-[AE]-E-L-T-S-S-D-L-D-N-I-E-I-E-V-V-G-S-P. A disordered region spans residues 290–377 (GSPAAPAEGP…HRLPPEPTFV (88 aa)). Low complexity predominate over residues 292-301 (PAAPAEGPAT). Residues 308–322 (EEDEELTSSDLDNIE) show a composition bias toward acidic residues. A compositionally biased stretch (pro residues) spans 329–342 (PRPPASSPPPPPPR). Basic and acidic residues predominate over residues 346–364 (RGRDHDHDHGHHRADDRGP). N-linked (GlcNAc...) asparagine; by host glycosylation occurs at Asn443. A helical transmembrane segment spans residues 463-483 (VALAGLVVVGIVIMCLHMAII).

Belongs to the alphaherpesvirinae glycoprotein G family.

The protein localises to the virion membrane. In terms of biological role, chemokine-binding protein that inhibits neutrophils' chemotaxis. The chain is Envelope glycoprotein G (gG) from Sus scrofa (Pig).